The chain runs to 284 residues: Bifunctional protein FolD (284 aa).

NADP(+) contacts are provided by residues 165 to 167 (GRS), serine 190, and isoleucine 231.

It belongs to the tetrahydrofolate dehydrogenase/cyclohydrolase family. As to quaternary structure, homodimer.

The catalysed reaction is (6R)-5,10-methylene-5,6,7,8-tetrahydrofolate + NADP(+) = (6R)-5,10-methenyltetrahydrofolate + NADPH. The enzyme catalyses (6R)-5,10-methenyltetrahydrofolate + H2O = (6R)-10-formyltetrahydrofolate + H(+). The protein operates within one-carbon metabolism; tetrahydrofolate interconversion. In terms of biological role, catalyzes the oxidation of 5,10-methylenetetrahydrofolate to 5,10-methenyltetrahydrofolate and then the hydrolysis of 5,10-methenyltetrahydrofolate to 10-formyltetrahydrofolate. The protein is Bifunctional protein FolD of Streptococcus thermophilus (strain ATCC BAA-491 / LMD-9).